A 554-amino-acid chain; its full sequence is Formate--tetrahydrofolate ligase (554 aa).

65–72 is a binding site for ATP; that stretch reads TPAGEGKT.

This sequence belongs to the formate--tetrahydrofolate ligase family.

The catalysed reaction is (6S)-5,6,7,8-tetrahydrofolate + formate + ATP = (6R)-10-formyltetrahydrofolate + ADP + phosphate. Its pathway is one-carbon metabolism; tetrahydrofolate interconversion. The protein is Formate--tetrahydrofolate ligase of Petrotoga mobilis (strain DSM 10674 / SJ95).